We begin with the raw amino-acid sequence, 506 residues long: Protein MGF 505-4R (506 aa).

This sequence belongs to the asfivirus MGF 505 family.

Its function is as follows. Plays a role in virus cell tropism, and may be required for efficient virus replication in macrophages. The polypeptide is Protein MGF 505-4R (Ornithodoros (relapsing fever ticks)).